A 369-amino-acid polypeptide reads, in one-letter code: tRNA-specific 2-thiouridylase MnmA (369 aa).

Residues 11-18 (GMSGGVDS) and methionine 37 each bind ATP. The tract at residues 97-99 (NPD) is interaction with target base in tRNA. Residue cysteine 102 is the Nucleophile of the active site. Cysteines 102 and 199 form a disulfide. Glycine 127 is a binding site for ATP. The segment at 149–151 (KDQ) is interaction with tRNA. Cysteine 199 (cysteine persulfide intermediate) is an active-site residue. The interval 311 to 312 (RY) is interaction with tRNA.

It belongs to the MnmA/TRMU family. As to quaternary structure, interacts with TusE.

Its subcellular location is the cytoplasm. It catalyses the reaction S-sulfanyl-L-cysteinyl-[protein] + uridine(34) in tRNA + AH2 + ATP = 2-thiouridine(34) in tRNA + L-cysteinyl-[protein] + A + AMP + diphosphate + H(+). Its function is as follows. Catalyzes the 2-thiolation of uridine at the wobble position (U34) of tRNA(Lys), tRNA(Glu) and tRNA(Gln), leading to the formation of s(2)U34, the first step of tRNA-mnm(5)s(2)U34 synthesis. Sulfur is provided by IscS, via a sulfur-relay system. Binds ATP and its substrate tRNAs. This is tRNA-specific 2-thiouridylase MnmA from Enterobacter sp. (strain 638).